The chain runs to 332 residues: Homeobox protein DLX-2 (332 aa).

The segment covering 19–28 (ASSTYHQHQQ) has biased composition (polar residues). Residues 19 to 83 (ASSTYHQHQQ…QHPAGGGGGG (65 aa)) form a disordered region. Positions 40–49 (NSNSSSSNSS) are enriched in low complexity. Over residues 55-75 (ESPTLPVSTATDSSYYTNQQH) the composition is skewed to polar residues. Positions 155 to 214 (VRKPRTIYSSFQLAALQRRFQKTQYLALPERAELAASLGLTQTQVKIWFQNRRSKFKKMW) form a DNA-binding region, homeobox. Disordered stretches follow at residues 219-272 (IPTE…SSPS) and 304-332 (PSQT…GTIF). Phosphoserine is present on serine 235. Positions 253–266 (AGGGPGSGGGGAGS) are enriched in gly residues. Positions 310-320 (AHHHHHHHHHA) are enriched in basic residues.

It belongs to the distal-less homeobox family. Interacts (via homeobox DNA-binding domain) with POU4F2; this interaction enhances retinal ganglion cell (RGC) differentiation. Phosphorylated by serine/threonine kinases. As to expression, expressed only in neural and other ectodermal structures of the head: the brain, the vomeronasal organ, and the preameloblasts of the teeth. Primarily expressed in the germinal cells of the ventral forebrain in the midgestational embryo, and in both dorsal and ventral ventricular zones in late embryogenesis and early postnatal life. Expressed in the inner nuclear layer of the retina.

The protein resides in the nucleus. In terms of biological role, acts as a transcriptional activator. Activates transcription of CGA/alpha-GSU, via binding to the downstream activin regulatory element (DARE) in the gene promoter. Plays a role in terminal differentiation of interneurons, such as amacrine and bipolar cells in the developing retina. Likely to play a regulatory role in the development of the ventral forebrain. May play a role in craniofacial patterning and morphogenesis. The sequence is that of Homeobox protein DLX-2 (Dlx2) from Mus musculus (Mouse).